Consider the following 275-residue polypeptide: 4-hydroxy-tetrahydrodipicolinate reductase (275 aa).

NAD(+)-binding positions include 13-18 (GAAGKM), 108-110 (GTT), and 134-137 (VPNF). His164 acts as the Proton donor/acceptor in catalysis. His165 lines the (S)-2,3,4,5-tetrahydrodipicolinate pocket. The active-site Proton donor is the Lys168. Position 174–175 (174–175 (GT)) interacts with (S)-2,3,4,5-tetrahydrodipicolinate.

This sequence belongs to the DapB family.

It localises to the cytoplasm. The enzyme catalyses (S)-2,3,4,5-tetrahydrodipicolinate + NAD(+) + H2O = (2S,4S)-4-hydroxy-2,3,4,5-tetrahydrodipicolinate + NADH + H(+). It catalyses the reaction (S)-2,3,4,5-tetrahydrodipicolinate + NADP(+) + H2O = (2S,4S)-4-hydroxy-2,3,4,5-tetrahydrodipicolinate + NADPH + H(+). Its pathway is amino-acid biosynthesis; L-lysine biosynthesis via DAP pathway; (S)-tetrahydrodipicolinate from L-aspartate: step 4/4. Its function is as follows. Catalyzes the conversion of 4-hydroxy-tetrahydrodipicolinate (HTPA) to tetrahydrodipicolinate. This Gloeothece citriformis (strain PCC 7424) (Cyanothece sp. (strain PCC 7424)) protein is 4-hydroxy-tetrahydrodipicolinate reductase.